We begin with the raw amino-acid sequence, 88 residues long: U24 protein (88 aa).

A Phosphothreonine modification is found at Thr-6. Positions 8–11 match the PPXY motif motif; the sequence is PPSY. Residues 58 to 78 form a helical membrane-spanning segment; that stretch reads FAFLVLTGLAIAMILFIAFVI.

As to quaternary structure, interacts with host ITCH; this interaction probably mediates ITCH degradation. Interacts probably with NEDD4.

It localises to the membrane. Down-regulates the TCR/CD3E complex and the transferrin receptor TFRC in host T-cells by blocking them from recycling back to the cell surface. The polypeptide is U24 protein (U24) (Human herpesvirus 6B (strain Z29) (HHV-6 variant B)).